Here is a 402-residue protein sequence, read N- to C-terminus: CD2 homolog (402 aa).

An N-terminal signal peptide occupies residues 1–16 (MIIIVIFLMCLKIVLN). The Extracellular portion of the chain corresponds to 17–204 (NIIIWSTLNQ…ILKYQNYLST (188 aa)). 18 N-linked (GlcNAc...) asparagine; by host glycosylation sites follow: asparagine 25, asparagine 37, asparagine 52, asparagine 55, asparagine 72, asparagine 77, asparagine 81, asparagine 89, asparagine 95, asparagine 108, asparagine 125, asparagine 137, asparagine 148, asparagine 153, asparagine 169, asparagine 177, asparagine 184, and asparagine 190. 2 cysteine pairs are disulfide-bonded: cysteine 126–cysteine 191 and cysteine 133–cysteine 174. The chain crosses the membrane as a helical span at residues 205–225 (LFYIIIFIVSGLIIGIFISII). Residues 226-402 (SVLSIRRKRK…ISLIHVDRII (177 aa)) lie on the Cytoplasmic side of the membrane. The disordered stretch occupies residues 238-276 (VEEIESPPPSESNEEDISHDDTTSIHEPSPREPLLPKPY). The span at 256-267 (HDDTTSIHEPSP) shows a compositional bias: basic and acidic residues. 11 tandem repeats follow at residues 302–307 (KPCPPP), 308–313 (KPCPPP), 314–319 (KPCPPP), 320–325 (KPCPPP), 326–331 (KPCSPP), 332–337 (KPCRPP), 338–343 (KPCPPP), 344–349 (KPCPPP), 350–355 (KPCPPP), 356–361 (KPCPPS), and 362–367 (KPCPSP). Residues 302-367 (KPCPPPKPCP…CPPSKPCPSP (66 aa)) are 11 X 6 AA tandem repeats of K-P-C-[PRS]-[P]-[PS]. Positions 319–386 (PKPCPPPKPC…PSIPLLPNIP (68 aa)) are enriched in pro residues. Residues 319 to 388 (PKPCPPPKPC…IPLLPNIPPL (70 aa)) are disordered.

This sequence belongs to the asfivirus CD2 homolog protein family. As to quaternary structure, both glycosylated and nonglycosylated forms interact (via C-terminus) with the host AP-1 complex. Post-translationally, cleaved into two fragments of 63 kDa and 26 kDa containing respectively the glycosylated N-terminus and the nonglycosylated C-terminus. A full-length 89-kDa glycosylated form also exists.

The protein localises to the host cell membrane. The protein resides in the virion membrane. It is found in the host Golgi apparatus. Functionally, may play an immunosuppressive role by inhibiting lymphocyte proliferation and subsequently facilitating viral replication and generalization of infection. Responsible for viral hemadsorption, which may help viral spread. Increases virus replication in the tick vector at the step of virus uptake or replication in the tick gut. May play a role in the host Golgi reorganization to yield viral factories. May play a role in host cell penetration. This chain is CD2 homolog, found in Ornithodoros (relapsing fever ticks).